Reading from the N-terminus, the 772-residue chain is 1,4-alpha-glucan branching enzyme GlgB (772 aa).

The active-site Nucleophile is Asp-431. Residue Glu-484 is the Proton donor of the active site.

The protein belongs to the glycosyl hydrolase 13 family. GlgB subfamily. In terms of assembly, monomer.

The catalysed reaction is Transfers a segment of a (1-&gt;4)-alpha-D-glucan chain to a primary hydroxy group in a similar glucan chain.. It participates in glycan biosynthesis; glycogen biosynthesis. In terms of biological role, catalyzes the formation of the alpha-1,6-glucosidic linkages in glycogen by scission of a 1,4-alpha-linked oligosaccharide from growing alpha-1,4-glucan chains and the subsequent attachment of the oligosaccharide to the alpha-1,6 position. The sequence is that of 1,4-alpha-glucan branching enzyme GlgB from Synechococcus sp. (strain RCC307).